An 814-amino-acid polypeptide reads, in one-letter code: Echinoderm microtubule-associated protein-like 1 (814 aa).

Residues 31–72 (SMEVSDRIASLEQRVQMQEDDIQLLKSALADVVRRLNITEEQ) are a coiled coil. Positions 77–180 (NRKGPTKARP…ESKPKEPAFS (104 aa)) are disordered. Residues 92–101 (PLRTTVNNGT) show a composition bias toward polar residues. Over residues 103–115 (LPKKPSASLPAPS) the composition is skewed to low complexity. Positions 127–137 (KSINRTSSSER) are enriched in polar residues. A compositionally biased stretch (basic and acidic residues) spans 142–152 (GRRESSGDSKG). The segment covering 155-167 (NRTGSTSSSSSGK) has biased composition (low complexity). The interval 175 to 814 (KEPAFSPEEG…DTSIMQWRVI (640 aa)) is tandem atypical propeller in EMLs. 12 WD repeats span residues 260–309 (EQLQ…IWDS), 314–357 (TLHV…VWDW), 362–399 (RLAD…FWTL), 408–445 (QGLF…VWGK), 449–488 (RISY…SWNG), 492–529 (KLHK…LQGT), 534–571 (FTPI…LWDA), 577–612 (VWDK…VFDT), 616–654 (DLVT…IYGV), 663–700 (RVGK…YWVP), 708–767 (SVET…LFSY), and 774–813 (APSH…QWRV).

Belongs to the WD repeat EMAP family. Homotrimer; self-association is mediated by the N-terminal coiled coil. Does not interact with EML3. Binds unpolymerized tubulins via its WD repeat region. Binds repolymerizing microtubules. Interacts with TASOR. As to expression, detected in adult brain cortex, hippocampus and thalamus. Expressed in the stomach, lungs and in Sertoli cells of the testis.

The protein localises to the cytoplasm. It localises to the perinuclear region. The protein resides in the cytoskeleton. In terms of biological role, modulates the assembly and organization of the microtubule cytoskeleton, and probably plays a role in regulating the orientation of the mitotic spindle and the orientation of the plane of cell division. Required for normal proliferation of neuronal progenitor cells in the developing brain and for normal brain development. Does not affect neuron migration per se. This chain is Echinoderm microtubule-associated protein-like 1 (Eml1), found in Mus musculus (Mouse).